A 431-amino-acid chain; its full sequence is Tol-Pal system protein TolB (431 aa).

The signal sequence occupies residues 1 to 18; it reads MKALLLSLLLLLPVVALA. Residues 410 to 431 form a disordered region; it reads LPLRTEKGTYQTPDWSPLPQAQ.

The protein belongs to the TolB family. The Tol-Pal system is composed of five core proteins: the inner membrane proteins TolA, TolQ and TolR, the periplasmic protein TolB and the outer membrane protein Pal. They form a network linking the inner and outer membranes and the peptidoglycan layer.

Its subcellular location is the periplasm. Functionally, part of the Tol-Pal system, which plays a role in outer membrane invagination during cell division and is important for maintaining outer membrane integrity. The protein is Tol-Pal system protein TolB of Myxococcus xanthus.